The sequence spans 507 residues: MFHFTRILAAFLLPTLCFCGYSTAPSSTVSIDNSLIGEPEVVCETASISLLFKTRNSFNGKVFVKGYVSEPSCMTVGDGKTGHRFEVRHDSCGVRRQREINGVVISATVIISFHSIFITKIDRAYRVSCFYVEGTKKVHNHVDISALTTQLLESETQLPVCRYEILNEAGGSPIKYARIGDQVYHKWTCVAELENVYCMKVHSCTVYDGQGGPPVTVIDANGCSVDGVILQNLEYTSDLTAGKLAPVFKFADKAGLYFNCQIQLTIKDVNYGCSNTQPQCPTSQYVVEPAQKTTETAEPYPYDSHESGYPTRPANYPVASSRYPIPTTQAPASYPSSPAPPPPGADIDNGYPEPQPIYIAETPENAYDGIVGFNDTEQPFTTSAAYTEDGVYSRLIKRNVVESTEQINASNKKRPVTVGDIDLPERGILVFGLEEMEDGETTNAGDHGATRALREARNSQEKTCFSTSRMYFTLILLCLLFATTVVVFIVIVQKQRQILAQTAFFKP.

The first 19 residues, 1 to 19 (MFHFTRILAAFLLPTLCFC), serve as a signal peptide directing secretion. The Extracellular portion of the chain corresponds to 20 to 471 (GYSTAPSSTV…KTCFSTSRMY (452 aa)). The ZP domain maps to 42–280 (VCETASISLL…YGCSNTQPQC (239 aa)). The interval 292-350 (KTTETAEPYPYDSHESGYPTRPANYPVASSRYPIPTTQAPASYPSSPAPPPPGADIDNG) is disordered. 2 N-linked (GlcNAc...) asparagine glycosylation sites follow: asparagine 374 and asparagine 408. Residues 472 to 492 (FTLILLCLLFATTVVVFIVIV) traverse the membrane as a helical segment. The Cytoplasmic segment spans residues 493–507 (QKQRQILAQTAFFKP).

It localises to the cell membrane. Functionally, plays a role in alae formation and subsequent cuticle attachment in adults. This is Cuticlin-4 from Caenorhabditis elegans.